The following is a 159-amino-acid chain: Major latex protein 149 (159 aa).

The protein belongs to the MLP family. As to expression, laticifer.

It localises to the vacuole. It is found in the cytoplasmic vesicle. In terms of biological role, not known; MLPs constitute up to 50% of the soluble latex protein. The polypeptide is Major latex protein 149 (MLP149) (Papaver somniferum (Opium poppy)).